Reading from the N-terminus, the 1011-residue chain is Protein translocase subunit SecA (1011 aa).

ATP-binding positions include Gln87, 105 to 109, and Asp500; that span reads GEGKT. A disordered region spans residues 969 to 1011; the sequence is SLPLGANPAPARPQPAVMQEQECPCGSGKPFNKCHGGEDEATA. Zn(2+)-binding residues include Cys991, Cys993, Cys1002, and His1003.

It belongs to the SecA family. Monomer and homodimer. Part of the essential Sec protein translocation apparatus which comprises SecA, SecYEG and auxiliary proteins SecDF-YajC and YidC. Requires Zn(2+) as cofactor.

Its subcellular location is the cell inner membrane. It is found in the cytoplasm. The enzyme catalyses ATP + H2O + cellular proteinSide 1 = ADP + phosphate + cellular proteinSide 2.. Part of the Sec protein translocase complex. Interacts with the SecYEG preprotein conducting channel. Has a central role in coupling the hydrolysis of ATP to the transfer of proteins into and across the cell membrane, serving as an ATP-driven molecular motor driving the stepwise translocation of polypeptide chains across the membrane. In Sorangium cellulosum (strain So ce56) (Polyangium cellulosum (strain So ce56)), this protein is Protein translocase subunit SecA.